Consider the following 600-residue polypeptide: DNA polymerase alpha subunit B (600 aa).

Positions 107-165 (ETLLSSYTTPSKGPLKRVSSTPETPLTKRSVAARSPRQLLSPSSFSPSATPSQKYTSRT) are disordered. S126 is subject to Phosphoserine. T127 and T130 each carry phosphothreonine. Low complexity predominate over residues 139–159 (ARSPRQLLSPSSFSPSATPSQ). S141, S147, S152, and S154 each carry phosphoserine.

Belongs to the DNA polymerase alpha subunit B family. Component of the alpha DNA polymerase complex (also known as the alpha DNA polymerase-primase complex) consisting of four subunits: the catalytic subunit POLA1, the regulatory subunit POLA2, and the primase complex subunits PRIM1 and PRIM2 respectively. Within the complex, POLA1 directly interacts with PRIM2. In terms of processing, phosphorylated in a cell cycle-dependent manner, in G2/M phase.

Its subcellular location is the nucleus. Accessory subunit of the DNA polymerase alpha complex (also known as the alpha DNA polymerase-primase complex) which plays an essential role in the initiation of DNA synthesis. During the S phase of the cell cycle, the DNA polymerase alpha complex (composed of a catalytic subunit POLA1, an accessory subunit POLA2 and two primase subunits, the catalytic subunit PRIM1 and the regulatory subunit PRIM2) is recruited to DNA at the replicative forks via direct interactions with MCM10 and WDHD1. The primase subunit of the polymerase alpha complex initiates DNA synthesis by oligomerising short RNA primers on both leading and lagging strands. These primers are initially extended by the polymerase alpha catalytic subunit and subsequently transferred to polymerase delta and polymerase epsilon for processive synthesis on the lagging and leading strand, respectively. This Mus musculus (Mouse) protein is DNA polymerase alpha subunit B (Pola2).